Reading from the N-terminus, the 259-residue chain is Ubiquitin-conjugating enzyme E2 J2 (259 aa).

The Cytoplasmic segment spans residues 1–226 (MSNNSNKRAP…AGLPQANRHH (226 aa)). Positions 12-162 (TATQRLKQDY…DKVFCELFPE (151 aa)) constitute a UBC core domain. Residue Cys-94 is the Glycyl thioester intermediate of the active site. The chain crosses the membrane as a helical; Anchor for type IV membrane protein span at residues 227–247 (GLLGGALANLFVIVGFAAFAY). Over 248–259 (TVKYVLRSIAQE) the chain is Lumenal.

This sequence belongs to the ubiquitin-conjugating enzyme family. Interacts with murid herpesvirus 4 protein K3 (mK3).

It is found in the endoplasmic reticulum membrane. The catalysed reaction is S-ubiquitinyl-[E1 ubiquitin-activating enzyme]-L-cysteine + [E2 ubiquitin-conjugating enzyme]-L-cysteine = [E1 ubiquitin-activating enzyme]-L-cysteine + S-ubiquitinyl-[E2 ubiquitin-conjugating enzyme]-L-cysteine.. It participates in protein modification; protein ubiquitination. Its function is as follows. Catalyzes the covalent attachment of ubiquitin to other proteins. Seems to function in the selective degradation of misfolded membrane proteins from the endoplasmic reticulum (ERAD). In cooperation with the GATOR2 complex, catalyzes 'Lys-6'-linked ubiquitination of NPRL2. In terms of biological role, in case of infection by the murid herpesvirus 4, its association with the viral E3 ligase K3 mediates ubiquitination of host surface class I (MHC-I) H-2D(b)/H2-D1 and H-2K(b)/H2-K1 molecules before they exit the endoplasmic reticulum, leading to their degradation by the ERAD system, thus blocking the immune detection of virus-infected cells. The complex formed with the murid herpesvirus 4 protein K3 mediates ubiquitination of lysine, as well as serine and threonine residues present in the cytoplasmic tail of surface class I molecules and promotes ubiquitination of hydroxylated serine or threonine residues via ester bonds instead of the classical isopeptide linkage. The protein is Ubiquitin-conjugating enzyme E2 J2 (Ube2j2) of Mus musculus (Mouse).